Reading from the N-terminus, the 80-residue chain is Cytochrome c oxidase subunit 7A1, mitochondrial (80 aa).

The N-terminal 21 residues, 1–21 (MRALRVSQALVRSFSSSTRSH), are a transit peptide targeting the mitochondrion. Topologically, residues 22–46 (LENRVAEKQKLFQADNDLPVHLKGG) are mitochondrial matrix. Residues 47–75 (GMDNVLYRLTMTLTLGGTAYCLYCLGWAS) traverse the membrane as a helical segment. Topologically, residues 76–80 (FPHKK) are mitochondrial intermembrane.

It belongs to the cytochrome c oxidase VIIa family. Component of the complex IV (CIV, cytochrome c oxidase), a multisubunit enzyme composed of 14 subunits. The complex is composed of a catalytic core of 3 subunits MT-CO1, MT-CO2 and MT-CO3, encoded in the mitochondrial DNA, and 11 supernumerary subunits COX4I, COX5A, COX5B, COX6A, COX6B, COX6C, COX7A, COX7B, COX7C, COX8 and NDUFA4, which are encoded in the nuclear genome. The complex exists as a monomer or a dimer and forms supercomplexes (SCs) in the inner mitochondrial membrane with NADH-ubiquinone oxidoreductase (complex I, CI) and ubiquinol-cytochrome c oxidoreductase (cytochrome b-c1 complex, complex III, CIII), resulting in different assemblies (supercomplex SCI(1)III(2)IV(1) and megacomplex MCI(2)III(2)IV(2)).

Its subcellular location is the mitochondrion inner membrane. The protein operates within energy metabolism; oxidative phosphorylation. Functionally, component of the mitochondrial respiratory complex IV (CIV, also named cytochrome c oxidase complex), the last enzyme in the mitochondrial electron transport chain which drives oxidative phosphorylation. The CIV complex is the component of the respiratory chain that catalyzes the reduction of oxygen to water. Acts as an assembly factor that specifically drives the homodimerization of CIV complexes, mediating the formation of mitochondrial respiratory supercomplexes (respirasomes) containing two CIV: supercomplxes with two molecules of CIV show improved activity. Despite being highly expressed in brown adipose tissue, not required for thermogenesis. In Mus musculus (Mouse), this protein is Cytochrome c oxidase subunit 7A1, mitochondrial.